We begin with the raw amino-acid sequence, 201 residues long: Lipoprotein signal peptidase (201 aa).

Transmembrane regions (helical) follow at residues 33 to 53, 86 to 106, and 110 to 130; these read LLLSIAAVVLTLDIVTKVLAV, GYTWVLTLIATGVVIGIFWMG, and VSSWWALGLGMILGGAMGNLV. Active-site residues include D146 and D160. Residues 158–178 traverse the membrane as a helical segment; it reads VADPSVVVGAILLVVLSIFGF.

Belongs to the peptidase A8 family.

The protein resides in the cell membrane. It carries out the reaction Release of signal peptides from bacterial membrane prolipoproteins. Hydrolyzes -Xaa-Yaa-Zaa-|-(S,diacylglyceryl)Cys-, in which Xaa is hydrophobic (preferably Leu), and Yaa (Ala or Ser) and Zaa (Gly or Ala) have small, neutral side chains.. Its pathway is protein modification; lipoprotein biosynthesis (signal peptide cleavage). Its function is as follows. This protein specifically catalyzes the removal of signal peptides from prolipoproteins. The protein is Lipoprotein signal peptidase of Mycobacterium leprae (strain Br4923).